Here is a 62-residue protein sequence, read N- to C-terminus: Photosystem II reaction center protein Z (62 aa).

2 consecutive transmembrane segments (helical) span residues 8 to 28 (AVFA…VVFA) and 41 to 61 (FSGT…NSLI).

Belongs to the PsbZ family. In terms of assembly, PSII is composed of 1 copy each of membrane proteins PsbA, PsbB, PsbC, PsbD, PsbE, PsbF, PsbH, PsbI, PsbJ, PsbK, PsbL, PsbM, PsbT, PsbY, PsbZ, Psb30/Ycf12, at least 3 peripheral proteins of the oxygen-evolving complex and a large number of cofactors. It forms dimeric complexes.

It is found in the plastid. The protein localises to the chloroplast thylakoid membrane. Functionally, may control the interaction of photosystem II (PSII) cores with the light-harvesting antenna, regulates electron flow through the 2 photosystem reaction centers. PSII is a light-driven water plastoquinone oxidoreductase, using light energy to abstract electrons from H(2)O, generating a proton gradient subsequently used for ATP formation. The sequence is that of Photosystem II reaction center protein Z from Phalaenopsis aphrodite subsp. formosana (Moth orchid).